A 492-amino-acid chain; its full sequence is Cysteine--tRNA ligase (492 aa).

Cys-31 is a Zn(2+) binding site. The 'HIGH' region motif lies at 33–43 (PTVYGDPHLGH). The Zn(2+) site is built by Cys-226, His-251, and Glu-255. Positions 283–287 (KMGKS) match the 'KMSKS' region motif. Lys-286 is an ATP binding site.

The protein belongs to the class-I aminoacyl-tRNA synthetase family. In terms of assembly, monomer. Requires Zn(2+) as cofactor.

The protein resides in the cytoplasm. It catalyses the reaction tRNA(Cys) + L-cysteine + ATP = L-cysteinyl-tRNA(Cys) + AMP + diphosphate. The polypeptide is Cysteine--tRNA ligase (Azobacteroides pseudotrichonymphae genomovar. CFP2).